The chain runs to 123 residues: Small ribosomal subunit protein uS12cz/uS12cy (123 aa).

It belongs to the universal ribosomal protein uS12 family. As to quaternary structure, part of the 30S ribosomal subunit.

It localises to the plastid. The protein localises to the chloroplast. Its function is as follows. With S4 and S5 plays an important role in translational accuracy. Located at the interface of the 30S and 50S subunits. In Platanus occidentalis (Sycamore), this protein is Small ribosomal subunit protein uS12cz/uS12cy (rps12-A).